A 232-amino-acid chain; its full sequence is 7-cyano-7-deazaguanine synthase (232 aa).

Phenylalanine 8–leucine 18 serves as a coordination point for ATP. Zn(2+) contacts are provided by cysteine 189, cysteine 198, cysteine 201, and cysteine 204.

The protein belongs to the QueC family. Zn(2+) is required as a cofactor.

The catalysed reaction is 7-carboxy-7-deazaguanine + NH4(+) + ATP = 7-cyano-7-deazaguanine + ADP + phosphate + H2O + H(+). Its pathway is purine metabolism; 7-cyano-7-deazaguanine biosynthesis. Its function is as follows. Catalyzes the ATP-dependent conversion of 7-carboxy-7-deazaguanine (CDG) to 7-cyano-7-deazaguanine (preQ(0)). The sequence is that of 7-cyano-7-deazaguanine synthase from Yersinia pseudotuberculosis serotype O:1b (strain IP 31758).